The sequence spans 409 residues: MVLSPKQEEELRFAVADYLQSCGYTNALEAFKKDASIPKEIDNKKYSGLLEKKWTSVVRLQKKVMDLELRLNNTTREMNSGVPTRNSRSSNDWIPRPPEKHSLSGHRSPITCVVFHPVYNVMVSSSEDASMKIWDYESGDFERTLRGHTDSVQDLAFDSSGKLLASSSADMTVKIWDFQTFECRMTLRGHDHNVSSVCFLPSGDFLLSSSRDKTIKMWEVATGYCVYNFEGHREWVRRVAVASDGSLMASCSNDQTVRIWSLSSKECKEELRGHEHVVECIKWAPESCNRYINEASGTEVPKGQKSGPFLASGSRDRVIKIWDVTTAVCLFSLVGHDNWVRGLAFHAGGKYLTSASDDKTIKIWELRHKRCSKSLEAHNHFVTTIDFHRSSPFVITGSVDLTIKVWECR.

A LisH domain is found at 7 to 39 (QEEELRFAVADYLQSCGYTNALEAFKKDASIPK). Residues 56–81 (SVVRLQKKVMDLELRLNNTTREMNSG) are a coiled coil. Positions 75-92 (TREMNSGVPTRNSRSSND) are enriched in polar residues. Residues 75–105 (TREMNSGVPTRNSRSSNDWIPRPPEKHSLSG) are disordered. WD repeat units follow at residues 105–146 (GHRS…RTLR), 147–186 (GHTDSVQDLAFDSSGKLLASSSADMTVKIWDFQTFECRMT), 189–228 (GHDHNVSSVCFLPSGDFLLSSSRDKTIKMWEVATGYCVYN), 231–270 (GHREWVRRVAVASDGSLMASCSNDQTVRIWSLSSKECKEE), 273–332 (GHEH…CLFS), 335–374 (GHDNWVRGLAFHAGGKYLTSASDDKTIKIWELRHKRCSKS), and 377–409 (AHNHFVTTIDFHRSSPFVITGSVDLTIKVWECR).

The protein belongs to the WD repeat LIS1/nudF family.

The protein resides in the cytoplasm. Its subcellular location is the cytoskeleton. The protein localises to the microtubule organizing center. It is found in the centrosome. Positively regulates the activity of the minus-end directed microtubule motor protein dynein. May enhance dynein-mediated microtubule sliding by targeting dynein to the microtubule plus end. Required for several dynein- and microtubule-dependent processes. The chain is Lissencephaly-1 homolog from Trichoplax adhaerens (Trichoplax reptans).